Here is a 590-residue protein sequence, read N- to C-terminus: EGF-like and EMI domain-containing protein 1 (590 aa).

A signal peptide spans 1–23; it reads MTSPLCFWCFCVWAAANWPPGSA. The 61-residue stretch at 44–104 folds into the EMI domain; that stretch reads LSRPCAQAFI…RCCPGWIQWD (61 aa). Residues 105-145 enclose the EGF-like 1 domain; sequence DEPGCFSSLSSLGTHFSGRECSYQDTRQCLCSQGFHGPHCQ. 11 disulfide bridges follow: Cys109–Cys125, Cys135–Cys144, Cys168–Cys179, Cys175–Cys188, Cys190–Cys203, Cys209–Cys219, Cys215–Cys228, Cys230–Cys243, Cys249–Cys260, Cys256–Cys269, and Cys271–Cys284. One can recognise an EGF-like 2; calcium-binding domain in the interval 164-204; the sequence is NVDECAVVNGGCQQRCINTLGTFHCECDTGYRRHADERTCI. The 40-residue stretch at 205 to 244 folds into the EGF-like 3 domain; sequence KTDPCAGANGCAHLCQTENGMARCACHAGYQLSEDKKACE. The 41-residue stretch at 245 to 285 folds into the EGF-like 4; calcium-binding domain; that stretch reads DINECAGELAPCAHHCVNSKGSFTCTCHPGFELGADRKHCY. The disordered stretch occupies residues 393–424; the sequence is RLAQNPPQPFPYLDPSLTASYEDEDNDDADSE. Positions 413 to 424 are enriched in acidic residues; that stretch reads YEDEDNDDADSE. The 37-residue stretch at 445–481 folds into the EGF-like 5 domain; the sequence is FGLDCSLSCEDCMNGGRCQEGKSGCLCPAEWTGLICN. 3 disulfide bridges follow: Cys449-Cys462, Cys456-Cys469, and Cys471-Cys480.

This Mus musculus (Mouse) protein is EGF-like and EMI domain-containing protein 1 (Egfem1).